Consider the following 1956-residue polypeptide: Sodium channel protein type 10 subunit alpha (1956 aa).

At 1–125 (MELPFASVGT…FNLIRRTAIK (125 aa)) the chain is on the cytoplasmic side. The interval 31–54 (HRAAKKARTKHRGQEDKGEKPRPQ) is disordered. Residues 32-41 (RAAKKARTKH) are compositionally biased toward basic residues. Basic and acidic residues predominate over residues 42–54 (RGQEDKGEKPRPQ). The I repeat unit spans residues 116 to 404 (FNLIRRTAIK…VTMAYEEQSQ (289 aa)). A helical membrane pass occupies residues 126–149 (VSVHSWFSIFITITILVNCVCMTR). Residues 150 to 154 (TDLPE) lie on the Extracellular side of the membrane. Residues 155–174 (KVEYVFTVIYTFEALIKILA) form a helical membrane-spanning segment. The Cytoplasmic segment spans residues 175-187 (RGFCLNEFTYLRD). A helical membrane pass occupies residues 188 to 206 (PWNWLDFSVITLAYVGAAI). Topologically, residues 207–212 (DLRGIS) are extracellular. A helical; Voltage-sensor membrane pass occupies residues 213-232 (GLRTFRVLRALKTVSVIPGL). Residues 233–248 (KVIVGALIHSVRKLAD) are Cytoplasmic-facing. A helical membrane pass occupies residues 249–272 (VTILTVFCLSVFALVGLQLFKGNL). Topologically, residues 273-340 (KNKCIRNGTD…PDFNYTSFDS (68 aa)) are extracellular. An intrachain disulfide couples Cys-276 to Cys-318. Residues Asn-279, Asn-288, Asn-311, and Asn-334 are each glycosylated (N-linked (GlcNAc...) asparagine). An intramembrane region (pore-forming) is located at residues 341-365 (FAWAFLSLFRLMTQDSWERLYQQTL). The Extracellular segment spans residues 366 to 372 (RASGKMY). The helical transmembrane segment at 373–398 (MVFFVLVIFLGSFYLVNLILAVVTMA) threads the bilayer. At 399–658 (YEEQSQATIA…KWRKFKMALF (260 aa)) the chain is on the cytoplasmic side. Ser-440, Ser-443, Ser-466, and Ser-478 each carry phosphoserine. Polar residues predominate over residues 441 to 453 (LQSHSGSPLASKN). 2 disordered regions span residues 441-484 (LQSH…YNQR) and 537-581 (LLGR…AGAP). The segment covering 475–484 (SPQSDPYNQR) has biased composition (polar residues). 2 positions are modified to phosphoserine: Ser-611 and Ser-614. One copy of the II repeat lies at 646–910 (CCPKWRKFKM…EDDGEVNNLQ (265 aa)). The helical transmembrane segment at 659 to 683 (ELVTDPFAELTITLCIVVNTVFMAM) threads the bilayer. Topologically, residues 684–694 (EHYPMTDAFDA) are extracellular. A helical membrane pass occupies residues 695-718 (MLQAGNIVFTVFFTMEMAFKIIAF). Topologically, residues 719 to 726 (DPYYYFQK) are cytoplasmic. Residues 727–746 (KWNIFDCVIVTVSLLELSAS) traverse the membrane as a helical segment. Residues 747–752 (KKGSLS) lie on the Extracellular side of the membrane. Residues 753–772 (VLRTFRLLRVFKLAKSWPTL) traverse the membrane as a helical; Voltage-sensor segment. Over 773–788 (NTLIKIIGNSVGALGN) the chain is Cytoplasmic. Residues 789-809 (LTFILAIIVFIFALVGKQLLS) form a helical membrane-spanning segment. Over 810–833 (EDYGCRKDGVSVWNGEKLRWHMCD) the chain is Extracellular. Residues 834–854 (FFHSFLVVFRILCGEWIENMW) constitute an intramembrane region (pore-forming). The Extracellular segment spans residues 855 to 863 (VCMEVSQKS). Cys-856 and Cys-865 are joined by a disulfide. Residues 864–889 (ICLILFLTVMVLGNLVVLNLFIALLL) traverse the membrane as a helical segment. Topologically, residues 890–1148 (NSFSADNLTA…GWQVRKTCYR (259 aa)) are cytoplasmic. Residues 1008–1094 (DELEEDMEQA…SEGSTVDCPD (87 aa)) form a disordered region. An III repeat occupies 1141-1450 (QVRKTCYRIV…KKYYNAMKKL (310 aa)). A helical transmembrane segment spans residues 1149-1172 (IVEHSWFESFIIFMILLSSGALAF). Residues 1173-1185 (EDNYLEEKPRVKS) lie on the Extracellular side of the membrane. Residues 1186 to 1211 (VLEYTDRVFTFIFVFEMLLKWVAYGF) form a helical membrane-spanning segment. Residues 1212–1217 (KKYFTN) lie on the Cytoplasmic side of the membrane. The helical transmembrane segment at 1218 to 1239 (AWCWLDFLIVNISLTSLIAKIL) threads the bilayer. Residues 1240–1243 (EYSD) lie on the Extracellular side of the membrane. Residues 1244–1265 (VASIKALRTLRALRPLRALSRF) traverse the membrane as a helical; Voltage-sensor segment. The Cytoplasmic portion of the chain corresponds to 1266-1284 (EGMRVVVDALVGAIPSIMN). The chain crosses the membrane as a helical span at residues 1285-1312 (VLLVCLIFWLIFSIMGVNLFAGKFSKCV). The Extracellular segment spans residues 1313 to 1354 (DTRNNPFSNVNSTMVNNKSECHNQNSTGHFFWVNVKVNFDNV). Residues Asn-1323, Asn-1329, and Asn-1337 are each glycosylated (N-linked (GlcNAc...) asparagine). Positions 1355 to 1376 (AMGYLALLQVATFKGWMDIMYA) form an intramembrane region, pore-forming. At 1377-1392 (AVDSGEINSQPNWENN) the chain is on the extracellular side. The chain crosses the membrane as a helical span at residues 1393-1419 (LYMYLYFVVFIIFGGFFTLNLFVGVII). The Cytoplasmic segment spans residues 1420–1472 (DNFNQQKKKLGGQDIFMTEEQKKYYNAMKKLGSKKPQKPIPRPLNKYQGFVFD). The residue at position 1452 (Ser-1452) is a Phosphoserine; by PKC. The IV repeat unit spans residues 1459-1758 (IPRPLNKYQG…WEKFDPEATQ (300 aa)). A helical transmembrane segment spans residues 1473 to 1496 (IVTRQAFDIIIMVLICLNMITMMV). The Extracellular portion of the chain corresponds to 1497 to 1507 (ETDEQGEEKTK). Residues 1508-1531 (VLGRINQFFVAVFTGECVMKMFAL) traverse the membrane as a helical segment. The Cytoplasmic portion of the chain corresponds to 1532–1537 (RQYYFT). Residues 1538-1561 (NGWNVFDFIVVILSIGSLLFSAIL) form a helical membrane-spanning segment. Over 1562 to 1573 (KSLENYFSPTLF) the chain is Extracellular. A helical; Voltage-sensor transmembrane segment spans residues 1574–1595 (RVIRLARIGRILRLIRAAKGIR). The Cytoplasmic segment spans residues 1596-1610 (TLLFALMMSLPALFN). The chain crosses the membrane as a helical span at residues 1611-1633 (IGLLLFLVMFIYSIFGMASFANV). At 1634-1647 (VDEAGIDDMFNFKT) the chain is on the extracellular side. The segment at residues 1648-1670 (FGNSMLCLFQITTSAGWDGLLSP) is an intramembrane region (pore-forming). At 1671 to 1698 (ILNTGPPYCDPNLPNSNGSRGNCGSPAV) the chain is on the extracellular side. The N-linked (GlcNAc...) asparagine glycan is linked to Asn-1687. A helical transmembrane segment spans residues 1699 to 1723 (GIIFFTTYIIISFLIVVNMYIAVIL). Residues 1724–1956 (ENFNVATEES…AKEGNSPGPQ (233 aa)) lie on the Cytoplasmic side of the membrane. An IQ domain is found at 1852-1881 (EDLSATVIQKAYRSYMLHRSLTLSNTLHVP). Positions 1906–1956 (DKSETASATSFPPSYDSVTRGLSDRANINPSSSMQNEDEVAAKEGNSPGPQ) are disordered. Over residues 1931 to 1940 (ANINPSSSMQ) the composition is skewed to polar residues.

The protein belongs to the sodium channel (TC 1.A.1.10) family. Nav1.8/SCN10A subfamily. As to quaternary structure, the channel consists of an ion conducting pore forming alpha-subunit regulated by one or more associated auxiliary subunits SCN1B, SCN2B and SCN3B; electrophysiological properties may vary depending on the type of the associated beta subunits. Found in a number of complexes with PRX, DYNLT1 and PDZD2. Interacts with proteins such as FSTL1, PRX, DYNLT1, PDZD2, S100A10 and many others. Interacts with NEDD4 and NEDD4L. In terms of processing, ubiquitinated by NEDD4L; which promotes its endocytosis. Post-translationally, phosphorylation at Ser-1452 by PKC in a highly conserved cytoplasmic loop slows inactivation of the sodium channel and reduces peak sodium currents. Lacks the cysteine which covalently binds the conotoxin GVIIJ. This cysteine (position 815) is speculated in other sodium channel subunits alpha to be implied in covalent binding with the sodium channel subunit beta-2 or beta-4. As to expression, expressed in dorsal root ganglia, trigeminal ganglia, nodose ganglia and sciatic nerve.

It is found in the cell membrane. It carries out the reaction Na(+)(in) = Na(+)(out). Functionally, tetrodotoxin-resistant channel that mediates the voltage-dependent sodium ion permeability of excitable membranes. Assuming opened or closed conformations in response to the voltage difference across the membrane, the protein forms a sodium-selective channel through which sodium ions may pass in accordance with their electrochemical gradient. Plays a role in neuropathic pain mechanisms. The polypeptide is Sodium channel protein type 10 subunit alpha (Rattus norvegicus (Rat)).